The chain runs to 391 residues: Succinate--CoA ligase [ADP-forming] subunit beta (391 aa).

The ATP-grasp domain maps to 9 to 248; sequence KDILRKFGVA…ISEEDPFEVE (240 aa). ATP contacts are provided by residues lysine 50, 57–59, glutamate 103, methionine 106, and glutamate 111; that span reads GRG. Mg(2+) contacts are provided by asparagine 203 and aspartate 217. Substrate-binding positions include asparagine 268 and 325–327; that span reads GIV.

Belongs to the succinate/malate CoA ligase beta subunit family. In terms of assembly, heterotetramer of two alpha and two beta subunits. Mg(2+) serves as cofactor.

It catalyses the reaction succinate + ATP + CoA = succinyl-CoA + ADP + phosphate. It carries out the reaction GTP + succinate + CoA = succinyl-CoA + GDP + phosphate. It functions in the pathway carbohydrate metabolism; tricarboxylic acid cycle; succinate from succinyl-CoA (ligase route): step 1/1. Its function is as follows. Succinyl-CoA synthetase functions in the citric acid cycle (TCA), coupling the hydrolysis of succinyl-CoA to the synthesis of either ATP or GTP and thus represents the only step of substrate-level phosphorylation in the TCA. The beta subunit provides nucleotide specificity of the enzyme and binds the substrate succinate, while the binding sites for coenzyme A and phosphate are found in the alpha subunit. In Chlorobium luteolum (strain DSM 273 / BCRC 81028 / 2530) (Pelodictyon luteolum), this protein is Succinate--CoA ligase [ADP-forming] subunit beta.